We begin with the raw amino-acid sequence, 491 residues long: Maintenance of mitochondrial morphology protein 1 (491 aa).

At 1-22 (MTFQQNEPSAVPAQSSLSFTQG) the chain is on the lumenal side. A helical transmembrane segment spans residues 23-43 (FLLGQLSVVLLIGAFIKFFIF). The Cytoplasmic portion of the chain corresponds to 44-491 (GEAPPPPSRG…GTLPGGAAAN (448 aa)). Disordered stretches follow at residues 50–95 (PSRG…PVPS), 275–325 (PPLH…SPKS), and 392–491 (RTGV…AAAN). A compositionally biased stretch (basic residues) spans 54 to 64 (LSHRASTHRRS). 2 stretches are compositionally biased toward polar residues: residues 65–78 (NSIY…GTSR) and 85–95 (STSNVLRPVPS). Residues 131–384 (QPESLDWFNV…EPRVQVVGLP (254 aa)) form the SMP-LTD domain. Residues 275–287 (PPLHTPSPSPSPP) show a composition bias toward pro residues. 2 stretches are compositionally biased toward polar residues: residues 300-315 (TNGS…NAQE) and 403-412 (TGSNAASRSA). Over residues 422–434 (RADDIGREPDGLR) the composition is skewed to basic and acidic residues.

It belongs to the MMM1 family. Homodimer. Component of the ER-mitochondria encounter structure (ERMES) or MDM complex, composed of mmm1, mdm10, mdm12 and mdm34. A mmm1 homodimer associates with one molecule of mdm12 on each side in a pairwise head-to-tail manner, and the SMP-LTD domains of mmm1 and mdm12 generate a continuous hydrophobic tunnel for phospholipid trafficking.

The protein localises to the endoplasmic reticulum membrane. In terms of biological role, component of the ERMES/MDM complex, which serves as a molecular tether to connect the endoplasmic reticulum (ER) and mitochondria. Components of this complex are involved in the control of mitochondrial shape and protein biogenesis, and function in nonvesicular lipid trafficking between the ER and mitochondria. The mdm12-mmm1 subcomplex functions in the major beta-barrel assembly pathway that is responsible for biogenesis of all outer membrane beta-barrel proteins, and acts in a late step after the SAM complex. The mdm10-mdm12-mmm1 subcomplex further acts in the TOM40-specific pathway after the action of the mdm12-mmm1 complex. Essential for establishing and maintaining the structure of mitochondria and maintenance of mtDNA nucleoids. In Aspergillus flavus (strain ATCC 200026 / FGSC A1120 / IAM 13836 / NRRL 3357 / JCM 12722 / SRRC 167), this protein is Maintenance of mitochondrial morphology protein 1.